The primary structure comprises 140 residues: MRRCLRVKTRRGQLGLASSCFEQHSCFSPRVNRILSAVQNTLCTGPSSQAPPQPPQASPPAAADHSRTPSLLASSHSASGGESLFQLYIASLAWPQNCCVLESCRRIPLGGLSSMENRRPLLRKGRLLRGQIHHSQTNEL.

Positions 43–77 (CTGPSSQAPPQPPQASPPAAADHSRTPSLLASSHS) are disordered. The segment covering 49–58 (QAPPQPPQAS) has biased composition (pro residues).

As to expression, widely expressed.

This chain is Smith-Magenis syndrome chromosomal region candidate gene 5 protein (SMCR5), found in Homo sapiens (Human).